The following is a 569-amino-acid chain: Proline--tRNA ligase (569 aa).

This sequence belongs to the class-II aminoacyl-tRNA synthetase family. ProS type 1 subfamily. Homodimer.

It localises to the cytoplasm. It catalyses the reaction tRNA(Pro) + L-proline + ATP = L-prolyl-tRNA(Pro) + AMP + diphosphate. Its function is as follows. Catalyzes the attachment of proline to tRNA(Pro) in a two-step reaction: proline is first activated by ATP to form Pro-AMP and then transferred to the acceptor end of tRNA(Pro). As ProRS can inadvertently accommodate and process non-cognate amino acids such as alanine and cysteine, to avoid such errors it has two additional distinct editing activities against alanine. One activity is designated as 'pretransfer' editing and involves the tRNA(Pro)-independent hydrolysis of activated Ala-AMP. The other activity is designated 'posttransfer' editing and involves deacylation of mischarged Ala-tRNA(Pro). The misacylated Cys-tRNA(Pro) is not edited by ProRS. The polypeptide is Proline--tRNA ligase (Campylobacter jejuni subsp. jejuni serotype O:2 (strain ATCC 700819 / NCTC 11168)).